A 104-amino-acid chain; its full sequence is MRGNAPTLKDIILYDLPTCDPTTCDTPPVDLYCYEQFDTSDEDDEDDDQPIKQDIQRYRIVCGCTQCGRSVKLVVSSTGADIQQLHQMLLDTLGIVCPLCACVE.

The segment at 1-49 (MRGNAPTLKDIILYDLPTCDPTTCDTPPVDLYCYEQFDTSDEDDEDDDQ) is E7 terminal domain. The short motif at 31–35 (LYCYE) is the LXCXE motif; interaction with host RB1 and TMEM173/STING element. The segment at 64 to 100 (CTQCGRSVKLVVSSTGADIQQLHQMLLDTLGIVCPLC) is a zinc-finger region. The Nuclear export signal motif lies at 82 to 90 (IQQLHQMLL).

It belongs to the papillomaviridae E7 protein family. In terms of assembly, homodimer. Homooligomer. Interacts with host RB1; this interaction induces dissociation of RB1-E2F1 complex thereby disrupting RB1 activity. Interacts with host EP300; this interaction represses EP300 transcriptional activity. Interacts with protein E2; this interaction inhibits E7 oncogenic activity. Interacts with host TMEM173/STING; this interaction impairs the ability of TMEM173/STING to sense cytosolic DNA and promote the production of type I interferon (IFN-alpha and IFN-beta). In terms of processing, highly phosphorylated.

The protein localises to the host cytoplasm. Its subcellular location is the host nucleus. Its function is as follows. Plays a role in viral genome replication by driving entry of quiescent cells into the cell cycle. Stimulation of progression from G1 to S phase allows the virus to efficiently use the cellular DNA replicating machinery to achieve viral genome replication. E7 protein has both transforming and trans-activating activities. Induces the disassembly of the E2F1 transcription factor from RB1, with subsequent transcriptional activation of E2F1-regulated S-phase genes. Interferes with host histone deacetylation mediated by HDAC1 and HDAC2, leading to transcription activation. Also plays a role in the inhibition of both antiviral and antiproliferative functions of host interferon alpha. Interaction with host TMEM173/STING impairs the ability of TMEM173/STING to sense cytosolic DNA and promote the production of type I interferon (IFN-alpha and IFN-beta). This is Protein E7 from Homo sapiens (Human).